The following is a 245-amino-acid chain: UPF0328 protein ECU09_2010 (245 aa).

Belongs to the UPF0328 family.

The protein is UPF0328 protein ECU09_2010 of Encephalitozoon cuniculi (strain GB-M1) (Microsporidian parasite).